Reading from the N-terminus, the 572-residue chain is Triacylglycerol lipase OBL1 (572 aa).

A helical transmembrane segment spans residues 110 to 130 (GYLVEFFLNLFSLNGNFLGLL). The tract at residues 320–356 (IPPSESSKSSTSFSDSDAHTGSDLSSDSERPTDTRKK) is disordered. The span at 323–334 (SESSKSSTSFSD) shows a compositional bias: low complexity. Positions 346-356 (DSERPTDTRKK) are enriched in basic and acidic residues. The GXSXG signature appears at 391-395 (GHSLG). The Nucleophile role is filled by Ser393. Catalysis depends on charge relay system residues Asp457 and His550.

The protein belongs to the AB hydrolase superfamily. Lipase family. Expressed in pollen grains and pollen tubes.

Its subcellular location is the lipid droplet. The protein resides in the membrane. It catalyses the reaction 1,2-di-(9Z-octadecenoyl)-glycerol + (9Z)-octadecenoate + H(+) = 1,2,3-tri-(9Z-octadecenoyl)-glycerol + H2O. The catalysed reaction is 1-(9Z-octadecenoyl)-glycerol + H2O = glycerol + (9Z)-octadecenoate + H(+). Acid lipase that can hydrolyze a range of triacylglycerols without a clear preference for acyl-chains. Can also cleave 1,2-diacylglycerol, 1,3-diacylglycerol and 1-monoacylglycerol, but not phosphatidylcholine, phosphatidylethanolamine, or sterol esters. Required for pollen tube growth. Triacylglycerol hydrolysis by OBL1 may provide acyl groups for the synthesis of membrane lipids in growing pollen tubes. The sequence is that of Triacylglycerol lipase OBL1 from Nicotiana tabacum (Common tobacco).